The chain runs to 365 residues: MTKMLAVGLMSGTSLDGIDAALIETDGAGHIRPIAFRSDPYAAQAREQLREAAALALSFDAPRPSPKIAAAEAMLTDRHVAAVRQLLAAARVEAGQVDVIGFHGQTIAHRPDRGWTWQIGDGAAMARALGIRVVNDLRSADVAAGGQGAPLLPVYHRALTAGMEGPVAVLNLGGVANITWLGAGEGELIAFDTGPANGLIDDWMLQETGSPYDAHGAFAARGTVDRAVLGAMLDNDWFDAPPPKSLDRADFTIQPARGLSAADGAATLTAFTAETVALALRHLPAPPRRLIVAGGGRHNPTLMKMIATATKITPEPIEALGWNGDATEAEGFAYMAVRSLKGQAISFPGTTGVAEPLTGGVTHRP.

Residue 12 to 19 (GTSLDGID) coordinates ATP.

The protein belongs to the anhydro-N-acetylmuramic acid kinase family.

It carries out the reaction 1,6-anhydro-N-acetyl-beta-muramate + ATP + H2O = N-acetyl-D-muramate 6-phosphate + ADP + H(+). It functions in the pathway amino-sugar metabolism; 1,6-anhydro-N-acetylmuramate degradation. It participates in cell wall biogenesis; peptidoglycan recycling. Its function is as follows. Catalyzes the specific phosphorylation of 1,6-anhydro-N-acetylmuramic acid (anhMurNAc) with the simultaneous cleavage of the 1,6-anhydro ring, generating MurNAc-6-P. Is required for the utilization of anhMurNAc either imported from the medium or derived from its own cell wall murein, and thus plays a role in cell wall recycling. This is Anhydro-N-acetylmuramic acid kinase from Rhizorhabdus wittichii (strain DSM 6014 / CCUG 31198 / JCM 15750 / NBRC 105917 / EY 4224 / RW1) (Sphingomonas wittichii).